The following is an 805-amino-acid chain: 1,4-alpha-glucan-branching enzyme 2-2, chloroplastic/amyloplastic (805 aa).

A chloroplast-targeting transit peptide spans 1 to 32 (MVVIHGVSLTPRFTLPSRPLNTGFNAGNSTLS). Catalysis depends on Asp451, which acts as the Nucleophile. The active-site Proton donor is the Glu506.

The protein belongs to the glycosyl hydrolase 13 family. GlgB subfamily. As to quaternary structure, monomer. Expressed in seedlings, roots, stems, leaves, inflorescences, seeds and flowers.

The protein resides in the plastid. It is found in the chloroplast stroma. Its subcellular location is the amyloplast. The catalysed reaction is Transfers a segment of a (1-&gt;4)-alpha-D-glucan chain to a primary hydroxy group in a similar glucan chain.. Its pathway is glycan biosynthesis; starch biosynthesis. Its function is as follows. Catalyzes the formation of the alpha-1,6-glucosidic linkages in starch by scission of a 1,4-alpha-linked oligosaccharide from growing alpha-1,4-glucan chains and the subsequent attachment of the oligosaccharide to the alpha-1,6 position. The polypeptide is 1,4-alpha-glucan-branching enzyme 2-2, chloroplastic/amyloplastic (SBE2.2) (Arabidopsis thaliana (Mouse-ear cress)).